We begin with the raw amino-acid sequence, 359 residues long: UDP-3-O-acylglucosamine N-acyltransferase (359 aa).

The active-site Proton acceptor is the His-256.

This sequence belongs to the transferase hexapeptide repeat family. LpxD subfamily. As to quaternary structure, homotrimer.

It catalyses the reaction a UDP-3-O-[(3R)-3-hydroxyacyl]-alpha-D-glucosamine + a (3R)-hydroxyacyl-[ACP] = a UDP-2-N,3-O-bis[(3R)-3-hydroxyacyl]-alpha-D-glucosamine + holo-[ACP] + H(+). Its pathway is bacterial outer membrane biogenesis; LPS lipid A biosynthesis. Catalyzes the N-acylation of UDP-3-O-acylglucosamine using 3-hydroxyacyl-ACP as the acyl donor. Is involved in the biosynthesis of lipid A, a phosphorylated glycolipid that anchors the lipopolysaccharide to the outer membrane of the cell. In Rhodopseudomonas palustris (strain HaA2), this protein is UDP-3-O-acylglucosamine N-acyltransferase.